The following is a 560-amino-acid chain: Poly(3-hydroxyalkanoate) polymerase 2 (560 aa).

Cys-296 is a catalytic residue.

Belongs to the PHA/PHB synthase family. Type II PhaC subfamily.

Its pathway is biopolymer metabolism; poly-(R)-3-hydroxybutanoate biosynthesis. Functionally, synthesizes poly(3-hydroxyalkanoates) (PHA), complements a mutant of P.putida that does not make PHA. In Ectopseudomonas oleovorans (Pseudomonas oleovorans), this protein is Poly(3-hydroxyalkanoate) polymerase 2.